The following is an 870-amino-acid chain: UvrABC system protein B (870 aa).

The 391-residue stretch at 20 to 410 folds into the Helicase ATP-binding domain; sequence EGVDNNDRTQ…VFAEQVIRPT (391 aa). ATP is bound at residue 33-40; it reads GVTGSGKT. A Beta-hairpin motif is present at residues 86–109; it reads YYDYYQPEAYVPRTDTFIEKESSI. Residues 425 to 591 form the Helicase C-terminal domain; sequence QVDDVVGEIR…SVKSRISDIL (167 aa). The 36-residue stretch at 620 to 655 folds into the UVR domain; sequence KAHLDAMEKQMRDAAANLDFEKAARIRDEIKRLREM. 2 disordered regions span residues 671–698 and 741–870; these read ESPV…QERF and AKPS…RPGK. Positions 679–689 are enriched in basic residues; sequence KGKHNKGVAKH. 2 stretches are compositionally biased toward basic and acidic residues: residues 793–808 and 827–836; these read NSLD…KPVE and TDVKDRDDSA. Over residues 858-870 the composition is skewed to basic residues; that stretch reads EKRRPGKTGRPGK.

This sequence belongs to the UvrB family. In terms of assembly, forms a heterotetramer with UvrA during the search for lesions. Interacts with UvrC in an incision complex.

The protein resides in the cytoplasm. Its function is as follows. The UvrABC repair system catalyzes the recognition and processing of DNA lesions. A damage recognition complex composed of 2 UvrA and 2 UvrB subunits scans DNA for abnormalities. Upon binding of the UvrA(2)B(2) complex to a putative damaged site, the DNA wraps around one UvrB monomer. DNA wrap is dependent on ATP binding by UvrB and probably causes local melting of the DNA helix, facilitating insertion of UvrB beta-hairpin between the DNA strands. Then UvrB probes one DNA strand for the presence of a lesion. If a lesion is found the UvrA subunits dissociate and the UvrB-DNA preincision complex is formed. This complex is subsequently bound by UvrC and the second UvrB is released. If no lesion is found, the DNA wraps around the other UvrB subunit that will check the other stand for damage. The sequence is that of UvrABC system protein B from Mesorhizobium japonicum (strain LMG 29417 / CECT 9101 / MAFF 303099) (Mesorhizobium loti (strain MAFF 303099)).